A 129-amino-acid polypeptide reads, in one-letter code: Small ribosomal subunit protein uS11 (129 aa).

Belongs to the universal ribosomal protein uS11 family. In terms of assembly, part of the 30S ribosomal subunit. Interacts with proteins S7 and S18. Binds to IF-3.

Located on the platform of the 30S subunit, it bridges several disparate RNA helices of the 16S rRNA. Forms part of the Shine-Dalgarno cleft in the 70S ribosome. The sequence is that of Small ribosomal subunit protein uS11 from Bacillus anthracis (strain A0248).